The following is an 89-amino-acid chain: Large ribosomal subunit protein bL27 (89 aa).

The disordered stretch occupies residues 1-22 (MAHKKAGGSSRNGRDSESKRLG).

The protein belongs to the bacterial ribosomal protein bL27 family.

In Brucella abortus (strain S19), this protein is Large ribosomal subunit protein bL27.